The chain runs to 61 residues: Small ribosomal subunit protein uS14 (61 aa).

Positions 24, 27, 40, and 43 each coordinate Zn(2+).

It belongs to the universal ribosomal protein uS14 family. Zinc-binding uS14 subfamily. Part of the 30S ribosomal subunit. Contacts proteins S3 and S10. Zn(2+) is required as a cofactor.

Binds 16S rRNA, required for the assembly of 30S particles and may also be responsible for determining the conformation of the 16S rRNA at the A site. In Mycoplasmoides gallisepticum (strain R(low / passage 15 / clone 2)) (Mycoplasma gallisepticum), this protein is Small ribosomal subunit protein uS14.